Reading from the N-terminus, the 850-residue chain is Pentatricopeptide repeat-containing protein At5g16860 (850 aa).

PPR repeat units follow at residues 58-88 (TLNL…FPPS), 91-125 (GVYH…SWTP), 126-160 (DNYT…GFIS), 161-191 (NVFV…MSVW), 192-227 (DVVS…GCRP), 228-262 (DNIT…EMIQ), 263-293 (NMFV…MSVK), 294-328 (DVVS…KIKM), 329-363 (DVVT…GIKP), 364-398 (NEVT…PIDL), 406-436 (ENMV…LSPK), 439-473 (DVVT…DCQT), 476-510 (NAFT…QQNA), 512-542 (PLFV…MMAK), 543-577 (NEVT…GFKL), 578-608 (DGVT…MKTV), and 614-644 (GPEH…MPME). The interval 649 to 724 (VWVAFLSCCR…RPGCSWVEGI (76 aa)) is type E motif. Residues 725 to 755 (KGTTTFFVGDKTHPHAKEIYQVLLDHMQRIK) form a type E(+) motif region. The type DYW motif stretch occupies residues 756-850 (DIGYVPETGF…NGSCSCKGYW (95 aa)).

The protein belongs to the PPR family. PCMP-H subfamily.

This chain is Pentatricopeptide repeat-containing protein At5g16860 (PCMP-H92), found in Arabidopsis thaliana (Mouse-ear cress).